The sequence spans 364 residues: DNA replication and repair protein RecF (364 aa).

Position 30–37 (Gly30–Thr37) interacts with ATP.

This sequence belongs to the RecF family.

It localises to the cytoplasm. The RecF protein is involved in DNA metabolism; it is required for DNA replication and normal SOS inducibility. RecF binds preferentially to single-stranded, linear DNA. It also seems to bind ATP. This chain is DNA replication and repair protein RecF, found in Clostridium botulinum (strain Okra / Type B1).